The sequence spans 243 residues: 1-(5-phosphoribosyl)-5-[(5-phosphoribosylamino)methylideneamino] imidazole-4-carboxamide isomerase (243 aa).

Catalysis depends on aspartate 8, which acts as the Proton acceptor. Aspartate 130 (proton donor) is an active-site residue.

This sequence belongs to the HisA/HisF family.

The protein resides in the cytoplasm. The catalysed reaction is 1-(5-phospho-beta-D-ribosyl)-5-[(5-phospho-beta-D-ribosylamino)methylideneamino]imidazole-4-carboxamide = 5-[(5-phospho-1-deoxy-D-ribulos-1-ylimino)methylamino]-1-(5-phospho-beta-D-ribosyl)imidazole-4-carboxamide. The protein operates within amino-acid biosynthesis; L-histidine biosynthesis; L-histidine from 5-phospho-alpha-D-ribose 1-diphosphate: step 4/9. The polypeptide is 1-(5-phosphoribosyl)-5-[(5-phosphoribosylamino)methylideneamino] imidazole-4-carboxamide isomerase (Acinetobacter baumannii (strain SDF)).